A 418-amino-acid polypeptide reads, in one-letter code: Serine hydroxymethyltransferase (418 aa).

(6S)-5,6,7,8-tetrahydrofolate contacts are provided by residues L121 and 125–127; that span reads GHL. K230 carries the post-translational modification N6-(pyridoxal phosphate)lysine. (6S)-5,6,7,8-tetrahydrofolate contacts are provided by residues E246 and 355 to 357; that span reads SPF.

The protein belongs to the SHMT family. Homodimer. Requires pyridoxal 5'-phosphate as cofactor.

Its subcellular location is the cytoplasm. It catalyses the reaction (6R)-5,10-methylene-5,6,7,8-tetrahydrofolate + glycine + H2O = (6S)-5,6,7,8-tetrahydrofolate + L-serine. Its pathway is one-carbon metabolism; tetrahydrofolate interconversion. It functions in the pathway amino-acid biosynthesis; glycine biosynthesis; glycine from L-serine: step 1/1. Functionally, catalyzes the reversible interconversion of serine and glycine with tetrahydrofolate (THF) serving as the one-carbon carrier. This reaction serves as the major source of one-carbon groups required for the biosynthesis of purines, thymidylate, methionine, and other important biomolecules. Also exhibits THF-independent aldolase activity toward beta-hydroxyamino acids, producing glycine and aldehydes, via a retro-aldol mechanism. The polypeptide is Serine hydroxymethyltransferase (Streptococcus pneumoniae serotype 2 (strain D39 / NCTC 7466)).